Reading from the N-terminus, the 337-residue chain is Ornithine carbamoyltransferase (337 aa).

Residues Ser-57–Thr-60, Gln-84, Arg-108, and His-135–Gln-138 contribute to the carbamoyl phosphate site. L-ornithine contacts are provided by residues Asn-167, Asp-231, and Ser-235–Met-236. Residues Cys-272–Leu-273 and Arg-317 each bind carbamoyl phosphate.

This sequence belongs to the aspartate/ornithine carbamoyltransferase superfamily. OTCase family.

The protein localises to the cytoplasm. The catalysed reaction is carbamoyl phosphate + L-ornithine = L-citrulline + phosphate + H(+). It participates in amino-acid degradation; L-arginine degradation via ADI pathway; carbamoyl phosphate from L-arginine: step 2/2. In terms of biological role, reversibly catalyzes the transfer of the carbamoyl group from carbamoyl phosphate (CP) to the N(epsilon) atom of ornithine (ORN) to produce L-citrulline. The sequence is that of Ornithine carbamoyltransferase from Streptococcus equi subsp. zooepidemicus (strain MGCS10565).